The sequence spans 79 residues: Conotoxin TsMSGL-2 (79 aa).

Residues 1–24 (MSGLGIMVLTLLLLVFMATSHQDA) form the signal peptide. Residues 25-46 (GEKQATQRDAVNVRRRRSIAGR) constitute a propeptide that is removed on maturation. 3 cysteine pairs are disulfide-bonded: cysteine 52/cysteine 64, cysteine 56/cysteine 73, and cysteine 63/cysteine 77. Leucine 78 carries the leucine amide modification.

This sequence belongs to the conotoxin O3 superfamily. Expressed by the venom duct.

Its subcellular location is the secreted. The sequence is that of Conotoxin TsMSGL-2 from Conus tessulatus (Tessellate cone).